A 123-amino-acid polypeptide reads, in one-letter code: Ribosome-binding factor A (123 aa).

Belongs to the RbfA family. Monomer. Binds 30S ribosomal subunits, but not 50S ribosomal subunits or 70S ribosomes.

Its subcellular location is the cytoplasm. One of several proteins that assist in the late maturation steps of the functional core of the 30S ribosomal subunit. Associates with free 30S ribosomal subunits (but not with 30S subunits that are part of 70S ribosomes or polysomes). Required for efficient processing of 16S rRNA. May interact with the 5'-terminal helix region of 16S rRNA. This Desulfatibacillum aliphaticivorans protein is Ribosome-binding factor A.